The chain runs to 170 residues: Myosin regulatory light chain 2, skeletal muscle isoform type 1 (170 aa).

A N,N,N-trimethylalanine modification is found at Ala-2. Ser-16 and Ser-17 each carry phosphoserine. Residues Thr-26 and Thr-36 each carry the phosphothreonine modification. The EF-hand 1 domain maps to 26-61 (TQIQEFKEAFTVIDQNRDGIIDKEDLRDTFAAMGRL). Asp-39, Asn-41, Asp-43, and Asp-50 together coordinate Ca(2+). At Ser-76 the chain carries Phosphoserine. 2 consecutive EF-hand domains span residues 96–131 (DPED…QCDR) and 132–167 (FSQE…GDAK). Thr-102 bears the Phosphothreonine mark.

In terms of assembly, myosin is a hexamer of 2 heavy chains and 4 light chains.

The sequence is that of Myosin regulatory light chain 2, skeletal muscle isoform type 1 from Oryctolagus cuniculus (Rabbit).